The chain runs to 405 residues: Phosphoglycerate kinase (405 aa).

Substrate contacts are provided by residues 24 to 26, R40, 63 to 66, R122, and R162; these read DFN and HLGR. Residues K212, E331, and 361-364 contribute to the ATP site; that span reads GGDS.

Belongs to the phosphoglycerate kinase family. In terms of assembly, monomer.

The protein localises to the cytoplasm. The catalysed reaction is (2R)-3-phosphoglycerate + ATP = (2R)-3-phospho-glyceroyl phosphate + ADP. Its pathway is carbohydrate degradation; glycolysis; pyruvate from D-glyceraldehyde 3-phosphate: step 2/5. The chain is Phosphoglycerate kinase from Corynebacterium glutamicum (strain R).